A 260-amino-acid polypeptide reads, in one-letter code: tRNA pseudouridine synthase C (260 aa).

Residue Asp-54 is part of the active site.

The protein belongs to the pseudouridine synthase RluA family.

It carries out the reaction uridine(65) in tRNA = pseudouridine(65) in tRNA. Its function is as follows. Responsible for synthesis of pseudouridine from uracil-65 in transfer RNAs. The sequence is that of tRNA pseudouridine synthase C (truC) from Salmonella typhi.